A 444-amino-acid polypeptide reads, in one-letter code: CBL-interacting serine/threonine-protein kinase 1 (444 aa).

One can recognise a Protein kinase domain in the interval 20–275 (YELGRTLGEG…VVGIKASEWF (256 aa)). ATP is bound by residues 26–34 (LGEGNFGKV) and K49. The Proton acceptor role is filled by D143. The segment at 161–190 (DFGLSALPQHFRDDGLLHTTCGSPNYVAPE) is activation loop. The residue at position 165 (S165) is a Phosphoserine. T179 bears the Phosphothreonine mark. One can recognise an NAF domain in the interval 313-337 (DSPTIINAFQLIGMSSFLDLSGFFE). The interval 343–372 (ERRIRFTSNSSAKDLLEKIETAVTEMGFSV) is PPI.

The protein belongs to the protein kinase superfamily. CAMK Ser/Thr protein kinase family. SNF1 subfamily. As to quaternary structure, interacts with CBL1. Interacts with CBL2. Interacts with CBL3. Interacts with CBL9. Interacts with ECT1 and ECT2. The cofactor is Mn(2+). Autophosphorylated. Ubiquitous.

The catalysed reaction is L-seryl-[protein] + ATP = O-phospho-L-seryl-[protein] + ADP + H(+). The enzyme catalyses L-threonyl-[protein] + ATP = O-phospho-L-threonyl-[protein] + ADP + H(+). In terms of biological role, CIPK serine-threonine protein kinases interact with CBL proteins. Binding of a CBL protein to the regulatory NAF domain of CIPK protein lead to the activation of the kinase in a calcium-dependent manner. This chain is CBL-interacting serine/threonine-protein kinase 1 (CIPK1), found in Arabidopsis thaliana (Mouse-ear cress).